Consider the following 204-residue polypeptide: UPF0637 protein Lm4b_01081 (204 aa).

The protein belongs to the UPF0637 family.

The protein is UPF0637 protein Lm4b_01081 of Listeria monocytogenes serotype 4b (strain CLIP80459).